Here is a 455-residue protein sequence, read N- to C-terminus: Fumarate hydratase class II (455 aa).

Residues 96-98, 122-125, 132-134, and Thr-180 each bind substrate; these read SGT, HPND, and SSN. Catalysis depends on His-181, which acts as the Proton donor/acceptor. The active site involves Ser-311. Residues Ser-312 and 317–319 contribute to the substrate site; that span reads KVN.

Belongs to the class-II fumarase/aspartase family. Fumarase subfamily. In terms of assembly, homotetramer.

It localises to the cytoplasm. It carries out the reaction (S)-malate = fumarate + H2O. It functions in the pathway carbohydrate metabolism; tricarboxylic acid cycle; (S)-malate from fumarate: step 1/1. Involved in the TCA cycle. Catalyzes the stereospecific interconversion of fumarate to L-malate. The chain is Fumarate hydratase class II from Listeria monocytogenes serotype 4b (strain F2365).